The primary structure comprises 248 residues: Myelin protein P0 (248 aa).

The signal sequence occupies residues 1 to 29 (MAPGAPSSSPSPILAVLLFSSLVLSPAQA). Residues 30–143 (IVVYTDREVH…DIVGKTSQVT (114 aa)) enclose the Ig-like V-type domain. Residues 30 to 153 (IVVYTDREVH…LYVFEKVPTR (124 aa)) lie on the Extracellular side of the membrane. The cysteines at positions 50 and 127 are disulfide-linked. An N-linked (GlcNAc...) (complex) asparagine glycan is attached at Asn122. A helical membrane pass occupies residues 154 to 179 (YGVVLGAVIGGVLGVVLLLLLLFYVV). Residues 180-248 (RYCWLRRQAA…GLGESRKDKK (69 aa)) lie on the Cytoplasmic side of the membrane. Ser210 carries the post-translational modification Phosphoserine; by PKC. The disordered stretch occupies residues 224-248 (DHSRSTKAVSEKKAKGLGESRKDKK). Phosphoserine is present on residues Ser226 and Ser228. Phosphoserine; by PKC occurs at positions 233 and 243.

This sequence belongs to the myelin P0 protein family. As to quaternary structure, homodimer and homotetramer. Post-translationally, N-glycosylated; contains sulfate-substituted glycan. As to expression, found only in peripheral nervous system Schwann cells.

The protein resides in the cell membrane. The protein localises to the myelin membrane. Its function is as follows. Is an adhesion molecule necessary for normal myelination in the peripheral nervous system. It mediates adhesion between adjacent myelin wraps and ultimately drives myelin compaction. This chain is Myelin protein P0 (MPZ), found in Homo sapiens (Human).